The primary structure comprises 206 residues: Small ribosomal subunit protein uS4A (206 aa).

The region spanning 98–163 is the S4 RNA-binding domain; the sequence is MRLDNVVYRL…SERFKMFAEN (66 aa).

The protein belongs to the universal ribosomal protein uS4 family. Part of the 30S ribosomal subunit. Contacts protein S5. The interaction surface between S4 and S5 is involved in control of translational fidelity.

Its function is as follows. One of the primary rRNA binding proteins, it binds directly to 16S rRNA where it nucleates assembly of the body of the 30S subunit. With S5 and S12 plays an important role in translational accuracy. The chain is Small ribosomal subunit protein uS4A from Clostridium perfringens (strain ATCC 13124 / DSM 756 / JCM 1290 / NCIMB 6125 / NCTC 8237 / Type A).